Reading from the N-terminus, the 704-residue chain is Phosphatidylinositol-3,5-bisphosphate 3-phosphatase MTMR8 (704 aa).

Positions 126 to 500 (GWKLIDPISD…YNIQFWCGMY (375 aa)) constitute a Myotubularin phosphatase domain. The a 1,2-diacyl-sn-glycero-3-phospho-(1D-myo-inositol-3,5-bisphosphate) site is built by asparagine 250, asparagine 275, and isoleucine 276. Positions 250, 275, and 276 each coordinate a 1,2-diacyl-sn-glycero-3-phospho-(1D-myo-inositol-3-phosphate). Cysteine 338 (phosphocysteine intermediate) is an active-site residue. The a 1,2-diacyl-sn-glycero-3-phospho-(1D-myo-inositol-3,5-bisphosphate) site is built by serine 339, aspartate 340, glycine 341, tryptophan 342, aspartate 343, arginine 344, lysine 380, and arginine 384. The a 1,2-diacyl-sn-glycero-3-phospho-(1D-myo-inositol-3-phosphate) site is built by serine 339, aspartate 340, glycine 341, tryptophan 342, aspartate 343, and arginine 344. Phosphate-binding residues include serine 339 and aspartate 340. Residues tryptophan 342, aspartate 343, and arginine 344 each contribute to the phosphate site. Arginine 384 serves as a coordination point for a 1,2-diacyl-sn-glycero-3-phospho-(1D-myo-inositol-3-phosphate). Residues 515–541 (ESLLEIKKQRAMLETDVHELEKKLKVR) are a coiled coil.

This sequence belongs to the protein-tyrosine phosphatase family. Non-receptor class myotubularin subfamily. Homodimer. Heterodimer with MTMR9.

The protein localises to the nucleus envelope. It carries out the reaction a 1,2-diacyl-sn-glycero-3-phospho-(1D-myo-inositol-3,5-bisphosphate) + H2O = a 1,2-diacyl-sn-glycero-3-phospho-(1D-myo-inositol-5-phosphate) + phosphate. The catalysed reaction is a 1,2-diacyl-sn-glycero-3-phospho-(1D-myo-inositol-3-phosphate) + H2O = a 1,2-diacyl-sn-glycero-3-phospho-(1D-myo-inositol) + phosphate. It catalyses the reaction 1,2-dioctanoyl-sn-glycero-3-phospho-(1D-myo-inositol-3,5-bisphosphate) + H2O = 1,2-dioctanoyl-sn-glycero-3-phospho-(1D-myo-inositol-5-phosphate) + phosphate. Interaction with MTMR9 increases phosphatase activity. In terms of biological role, lipid phosphatase that specifically dephosphorylates the D-3 position of phosphatidylinositol 3-phosphate and phosphatidylinositol 3,5-bisphosphate, generating phosphatidylinositol and phosphatidylinositol 5-phosphate. In complex with MTMR9, negatively regulates autophagy. This Homo sapiens (Human) protein is Phosphatidylinositol-3,5-bisphosphate 3-phosphatase MTMR8.